The primary structure comprises 649 residues: Archaeal Lon protease (649 aa).

Residues 1–114 (MFSIKFKTTE…KLDFKAPSST (114 aa)) lie on the Cytoplasmic side of the membrane. 47-54 (GDPGVGKS) lines the ATP pocket. The chain crosses the membrane as a helical span at residues 115–135 (TLLLIMIGAILLSEYLLKYLP). The Extracellular portion of the chain corresponds to 136-138 (QNY). A helical transmembrane segment spans residues 139–159 (LLAAVTITALIVLIFGFVIIL). Topologically, residues 160-649 (TSIMGASRAS…DNRGGAERFN (490 aa)) are cytoplasmic. Positions 456 to 639 (EPKVGVIYGL…DEIVPLVFDL (184 aa)) constitute a Lon proteolytic domain. Catalysis depends on residues S550 and K593.

This sequence belongs to the peptidase S16 family. Archaeal LonB subfamily. Homohexamer. Organized in a ring with a central cavity.

The protein localises to the cell membrane. In terms of biological role, ATP-dependent serine protease that mediates the selective degradation of mutant and abnormal proteins as well as certain short-lived regulatory proteins. Degrades polypeptides processively. The polypeptide is Archaeal Lon protease (Methanocaldococcus jannaschii (strain ATCC 43067 / DSM 2661 / JAL-1 / JCM 10045 / NBRC 100440) (Methanococcus jannaschii)).